A 719-amino-acid chain; its full sequence is Fatty acid oxidation complex subunit alpha (719 aa).

The segment at 1 to 190 (MVYQGNRITV…KLGLVDATVA (190 aa)) is enoyl-CoA hydratase/isomerase. Asp-298 serves as a coordination point for substrate. A 3-hydroxyacyl-CoA dehydrogenase region spans residues 313–719 (HEINEAAVLG…AAGETFYATA (407 aa)). Residues Met-326, Asp-345, 402–404 (VVE), Lys-409, and Ser-431 each bind NAD(+). The active-site For 3-hydroxyacyl-CoA dehydrogenase activity is His-452. Asn-455 lines the NAD(+) pocket. Residue Asn-502 participates in substrate binding.

In the N-terminal section; belongs to the enoyl-CoA hydratase/isomerase family. The protein in the C-terminal section; belongs to the 3-hydroxyacyl-CoA dehydrogenase family. Heterotetramer of two alpha chains (FadB) and two beta chains (FadA).

It catalyses the reaction a (3S)-3-hydroxyacyl-CoA + NAD(+) = a 3-oxoacyl-CoA + NADH + H(+). The enzyme catalyses a (3S)-3-hydroxyacyl-CoA = a (2E)-enoyl-CoA + H2O. The catalysed reaction is a 4-saturated-(3S)-3-hydroxyacyl-CoA = a (3E)-enoyl-CoA + H2O. It carries out the reaction (3S)-3-hydroxybutanoyl-CoA = (3R)-3-hydroxybutanoyl-CoA. It catalyses the reaction a (3Z)-enoyl-CoA = a 4-saturated (2E)-enoyl-CoA. The enzyme catalyses a (3E)-enoyl-CoA = a 4-saturated (2E)-enoyl-CoA. It participates in lipid metabolism; fatty acid beta-oxidation. Involved in the aerobic and anaerobic degradation of long-chain fatty acids via beta-oxidation cycle. Catalyzes the formation of 3-oxoacyl-CoA from enoyl-CoA via L-3-hydroxyacyl-CoA. It can also use D-3-hydroxyacyl-CoA and cis-3-enoyl-CoA as substrate. The sequence is that of Fatty acid oxidation complex subunit alpha from Psychrobacter arcticus (strain DSM 17307 / VKM B-2377 / 273-4).